We begin with the raw amino-acid sequence, 480 residues long: uncharacterized protein (480 aa).

The PUA domain occupies 131-207 (KKIIKIKNDV…KVVKVRFFIK (77 aa)).

In the C-terminal section; belongs to the PAPS reductase family.

This is an uncharacterized protein from Methanocaldococcus jannaschii (strain ATCC 43067 / DSM 2661 / JAL-1 / JCM 10045 / NBRC 100440) (Methanococcus jannaschii).